We begin with the raw amino-acid sequence, 101 residues long: Small ribosomal subunit protein uS14 (101 aa).

Residues 1-24 form a disordered region; the sequence is MAKVSSIKKNEKRKKLSQSLHNKR. Residues 10-24 are compositionally biased toward basic residues; that stretch reads NEKRKKLSQSLHNKR.

Belongs to the universal ribosomal protein uS14 family. As to quaternary structure, part of the 30S ribosomal subunit. Contacts proteins S3 and S10.

Functionally, binds 16S rRNA, required for the assembly of 30S particles and may also be responsible for determining the conformation of the 16S rRNA at the A site. This chain is Small ribosomal subunit protein uS14, found in Rickettsia bellii (strain OSU 85-389).